The chain runs to 482 residues: Glutamate--tRNA ligase (482 aa).

The 'HIGH' region motif lies at 9-19 (PSPTGYLHIGG). A 'KMSKS' region motif is present at residues 252 to 256 (KLSKR). Residue Lys255 coordinates ATP.

This sequence belongs to the class-I aminoacyl-tRNA synthetase family. Glutamate--tRNA ligase type 1 subfamily. Monomer.

The protein localises to the cytoplasm. It catalyses the reaction tRNA(Glu) + L-glutamate + ATP = L-glutamyl-tRNA(Glu) + AMP + diphosphate. In terms of biological role, catalyzes the attachment of glutamate to tRNA(Glu) in a two-step reaction: glutamate is first activated by ATP to form Glu-AMP and then transferred to the acceptor end of tRNA(Glu). This is Glutamate--tRNA ligase from Ureaplasma parvum serovar 3 (strain ATCC 27815 / 27 / NCTC 11736).